We begin with the raw amino-acid sequence, 92 residues long: Protein AC152 (92 aa).

In terms of biological role, acts as a transactivator of AC102 and HE65 genes. Therefore, participates in the global recruitment of G-actin to the host nucleus. In Autographa californica nuclear polyhedrosis virus (AcMNPV), this protein is Protein AC152 (AC152).